The following is a 524-amino-acid chain: Peptide chain release factor 3 (524 aa).

Residues 10 to 278 (DSRRTFAIIS…TFLQFAPAPH (269 aa)) form the tr-type G domain. GTP-binding positions include 19-26 (SHPDAGKT), 87-91 (DTPGH), and 141-144 (NKLD).

This sequence belongs to the TRAFAC class translation factor GTPase superfamily. Classic translation factor GTPase family. PrfC subfamily.

The protein resides in the cytoplasm. Increases the formation of ribosomal termination complexes and stimulates activities of RF-1 and RF-2. It binds guanine nucleotides and has strong preference for UGA stop codons. It may interact directly with the ribosome. The stimulation of RF-1 and RF-2 is significantly reduced by GTP and GDP, but not by GMP. The sequence is that of Peptide chain release factor 3 from Enterococcus faecalis (strain ATCC 700802 / V583).